The primary structure comprises 918 residues: Aconitase-ribosomal protein bL21m fusion protein (918 aa).

The transit peptide at 1 to 30 directs the protein to the mitochondrion; that stretch reads MATFARMKLCLSGSSQAIPSKGISLVAARF. The segment at 31–811 is homocitrate dehydratase, mitochondrial; the sequence is QSTASRASYV…IDSIKQQPDH (781 aa). Residues Q105 and 198-200 each bind substrate; that span reads DSH. [4Fe-4S] cluster-binding residues include C394, C457, and C460. Residues R484, R489, K619, and 680–681 contribute to the substrate site; that span reads AR. The interval 812 to 918 is large ribosomal subunit protein bL21m; sequence YADAYIFNRH…ILRVTELKLN (107 aa).

It in the N-terminal section; belongs to the aconitase/IPM isomerase family. This sequence in the C-terminal section; belongs to the bacterial ribosomal protein bL21 family. As to quaternary structure, component of the mitochondrial large ribosomal subunit (mt-LSU). Mature yeast 74S mitochondrial ribosomes consist of a small (37S) and a large (54S) subunit. The 37S small subunit contains a 15S ribosomal RNA (15S mt-rRNA) and at least 32 different proteins. The 54S large subunit contains a 21S rRNA (21S mt-rRNA) and at least 45 different proteins. [4Fe-4S] cluster is required as a cofactor.

The protein resides in the mitochondrion. It is found in the nucleus. It carries out the reaction (2R)-homocitrate = cis-homoaconitate + H2O. The protein operates within amino-acid biosynthesis; L-lysine biosynthesis via AAA pathway; L-alpha-aminoadipate from 2-oxoglutarate: step 2/5. In terms of biological role, catalyzes the reversible dehydration of (R)-homocitrate to cis-homoaconitate, a step in the alpha-aminoadipate pathway for lysine biosynthesis. Its function is as follows. Component of the mitochondrial ribosome (mitoribosome), a dedicated translation machinery responsible for the synthesis of mitochondrial genome-encoded proteins, including at least some of the essential transmembrane subunits of the mitochondrial respiratory chain. The mitoribosomes are attached to the mitochondrial inner membrane and translation products are cotranslationally integrated into the membrane. The sequence is that of Aconitase-ribosomal protein bL21m fusion protein (aco2) from Schizosaccharomyces pombe (strain 972 / ATCC 24843) (Fission yeast).